The chain runs to 794 residues: Ent-copalyl diphosphate synthase 2 (794 aa).

A chloroplast-targeting transit peptide spans 1 to 35 (MSSSSNVTSLPRLTTAGGVFPREMVRVHSSCNILR). Lys-238 contacts substrate. Positions 369 and 371 each coordinate Mg(2+). Residues 369–372 (DVDD) carry the DXDD motif motif. Lys-455 contacts substrate.

Belongs to the terpene synthase family. Tpsc subfamily. Mg(2+) serves as cofactor. Expressed in leaves.

The protein resides in the plastid. It is found in the chloroplast. The enzyme catalyses (2E,6E,10E)-geranylgeranyl diphosphate = ent-copalyl diphosphate. It functions in the pathway secondary metabolite biosynthesis; terpenoid biosynthesis. Its function is as follows. Involved in the biosynthesis of ent-kaurene diterpenoids natural products such as oridonin, miltiradiene, eriocalyxin B and nezukol, known to exhibit antitumor, anti-inflammatory and antibacterial activities. Catalyzes the conversion of (2E,6E,10E)-geranylgeranyl diphosphate (GGPP) to ent-copalyl diphosphate (ent-CPP). This chain is Ent-copalyl diphosphate synthase 2, found in Isodon eriocalyx (Plectranthus eriocalyx).